Reading from the N-terminus, the 244-residue chain is Ribosomal RNA large subunit methyltransferase E (244 aa).

G81, W83, D109, D125, and D149 together coordinate S-adenosyl-L-methionine. K189 (proton acceptor) is an active-site residue.

The protein belongs to the class I-like SAM-binding methyltransferase superfamily. RNA methyltransferase RlmE family.

It is found in the cytoplasm. The catalysed reaction is uridine(2552) in 23S rRNA + S-adenosyl-L-methionine = 2'-O-methyluridine(2552) in 23S rRNA + S-adenosyl-L-homocysteine + H(+). Specifically methylates the uridine in position 2552 of 23S rRNA at the 2'-O position of the ribose in the fully assembled 50S ribosomal subunit. The protein is Ribosomal RNA large subunit methyltransferase E of Cereibacter sphaeroides (strain ATCC 17029 / ATH 2.4.9) (Rhodobacter sphaeroides).